The following is a 136-amino-acid chain: uncharacterized protein (136 aa).

The interval 1-51 is disordered; it reads MAANATSGRPPSIALRQPEATGWRRGIPAKVATKGTQAEREGDVRSGGRAR. Basic and acidic residues predominate over residues 37-46; the sequence is QAEREGDVRS.

This is an uncharacterized protein from Homo sapiens (Human).